The sequence spans 600 residues: DDB1- and CUL4-associated factor 15 (600 aa).

The interval 1 to 30 is disordered; it reads MAPSSKSERNSGAGSGGGGPGGAGGKRAAG. Gly residues predominate over residues 13–27; it reads AGSGGGGPGGAGGKR. Serine 50 bears the Phosphoserine mark. Residues cysteine 193, cysteine 196, cysteine 211, and histidine 214 each contribute to the Zn(2+) site. E7820 contacts are provided by residues phenylalanine 231 and 234–235; that span reads AF. The span at 280-295 shows a compositional bias: pro residues; that stretch reads PASPPEPQSPELPPAL. The tract at residues 280 to 316 is disordered; the sequence is PASPPEPQSPELPPALPSFCPEAAPARSSGSPEPSPA. Serine 310 and serine 314 each carry phosphoserine.

Component of the DCX(DCAF15) complex, also named CLR4(DCAF15) complex, composed of DCAF15, DDB1, cullin-4 (CUL4A or CUL4B), DDA1 and RBX1.

It functions in the pathway protein modification; protein ubiquitination. Its activity is regulated as follows. Aryl sulfonamide anticancer drugs change the substrate specificity of DCAF15 by acting as a molecular glue that promotes binding between DCAF15 and weak affinity interactors, such as RBM39. Its function is as follows. Substrate-recognition component of the DCX(DCAF15) complex, a cullin-4-RING E3 ubiquitin-protein ligase complex that mediates ubiquitination and degradation of target proteins. The DCX(DCAF15) complex acts as a regulator of the natural killer (NK) cells effector functions, possibly by mediating ubiquitination and degradation of cohesin subunits SMC1A and SMC3. May play a role in the activation of antigen-presenting cells (APC) and their interaction with NK cells. Binding of aryl sulfonamide anticancer drugs, such as indisulam (E7070) or E7820, change the substrate specificity of the DCX(DCAF15) complex, leading to promote ubiquitination and degradation of splicing factor RBM39. RBM39 degradation results in splicing defects and death in cancer cell lines. Aryl sulfonamide anticancer drugs change the substrate specificity of DCAF15 by acting as a molecular glue that promotes binding between DCAF15 and weak affinity interactor RBM39. Aryl sulfonamide anticancer drugs also promote ubiquitination and degradation of RBM23 and PRPF39. In Homo sapiens (Human), this protein is DDB1- and CUL4-associated factor 15.